A 729-amino-acid polypeptide reads, in one-letter code: Elongation factor 2 (729 aa).

Residues 19–262 enclose the tr-type G domain; sequence EQIRNIAIAA…MVCEHFPNPI (244 aa). GTP contacts are provided by residues 28 to 35, 94 to 98, and 148 to 151; these read AHVDHGKT, DTPGH, and NKVD. Histidine 597 bears the Diphthamide mark.

It belongs to the TRAFAC class translation factor GTPase superfamily. Classic translation factor GTPase family. EF-G/EF-2 subfamily.

It is found in the cytoplasm. Its function is as follows. Catalyzes the GTP-dependent ribosomal translocation step during translation elongation. During this step, the ribosome changes from the pre-translocational (PRE) to the post-translocational (POST) state as the newly formed A-site-bound peptidyl-tRNA and P-site-bound deacylated tRNA move to the P and E sites, respectively. Catalyzes the coordinated movement of the two tRNA molecules, the mRNA and conformational changes in the ribosome. In Halomicrobium mukohataei (strain ATCC 700874 / DSM 12286 / JCM 9738 / NCIMB 13541) (Haloarcula mukohataei), this protein is Elongation factor 2.